A 428-amino-acid chain; its full sequence is Adenylosuccinate synthetase (428 aa).

GTP is bound by residues 12 to 18 (GDEGKGK) and 40 to 42 (GHS). Residue Asp-13 is the Proton acceptor of the active site. Mg(2+) contacts are provided by Asp-13 and Gly-40. Residues 13–16 (DEGK), 38–41 (NAGH), Thr-128, Arg-142, Gln-223, Thr-238, and Arg-302 contribute to the IMP site. The active-site Proton donor is His-41. 298 to 304 (VTTGRPR) is a binding site for substrate. Residues Arg-304, 330-332 (KLD), and 412-414 (GTG) each bind GTP.

Belongs to the adenylosuccinate synthetase family. As to quaternary structure, homodimer. Mg(2+) serves as cofactor.

It is found in the cytoplasm. The catalysed reaction is IMP + L-aspartate + GTP = N(6)-(1,2-dicarboxyethyl)-AMP + GDP + phosphate + 2 H(+). The protein operates within purine metabolism; AMP biosynthesis via de novo pathway; AMP from IMP: step 1/2. Functionally, plays an important role in the de novo pathway of purine nucleotide biosynthesis. Catalyzes the first committed step in the biosynthesis of AMP from IMP. The sequence is that of Adenylosuccinate synthetase from Bifidobacterium longum (strain NCC 2705).